The sequence spans 258 residues: F-box/SPRY domain-containing protein 1 (258 aa).

Residues 6–54 (MEYAPNIPDNVLELIFSFLKLQDLRNCTLVCKSWYRFFCDENNEVWRAQ) enclose the F-box domain. The B30.2/SPRY domain maps to 64 to 256 (FKNDLLTVVP…ISMVYLGAPL (193 aa)).

This sequence belongs to the FBXO45/Fsn family. In terms of assembly, component of an E3 ubiquitin ligase complex composed of hiw and Fsn.

The protein resides in the synapse. The protein operates within protein modification; protein ubiquitination. Its function is as follows. Required in the presynaptic motoneuron to down-regulate the levels of wnd and restrain synaptic terminal growth at the neuromuscular junction (NMJ). The polypeptide is F-box/SPRY domain-containing protein 1 (Anopheles gambiae (African malaria mosquito)).